The following is a 956-amino-acid chain: Ubiquitin carboxyl-terminal hydrolase CYLD (956 aa).

The tract at residues 106-593 (CEERFSLFKN…LEIMIGKKKG (488 aa)) is interaction with TRIP. 2 consecutive CAP-Gly domains span residues 153–198 (LAER…VFVA) and 253–286 (DVLP…VQLC). Residues 309 to 353 (SVTQERRPPKLAFMSRGVGDKGSSSHNKPKATGSTSDPGNRNRSE) form a disordered region. Residues 330-349 (GSSSHNKPKATGSTSDPGNR) are compositionally biased toward polar residues. Ser387 is subject to Phosphoserine. Residues 392–411 (STDFDRSSPPLQPPPVNSLT) are disordered. Residues 394–469 (DFDRSSPPLQ…LAMPPGNSHG (76 aa)) are interaction with TRAF2. 2 positions are modified to phosphoserine: Ser418 and Ser422. The segment at 470–554 (LEVGSLAEVK…FASLQPVSNQ (85 aa)) is interaction with IKBKG/NEMO. The CAP-Gly 3 domain maps to 492–535 (GQPPGLNEVLAGLELEDECAGCTDGTFRGTRYFTCALKKALFVK). Residues 592–950 (KGIQGHYNSC…DAYMCMYQSP (359 aa)) enclose the USP domain. The Nucleophile role is filled by Cys601. The tract at residues 781–833 (LEDTPRQCRICGGLAMYECRECYDDPDISAGKIKQFCKTCNTQVHLHPKRLNH) is B-box. Zn(2+)-binding residues include Cys788, Cys791, Cys799, Cys802, Cys817, Cys820, His825, and His833. His871 functions as the Proton acceptor in the catalytic mechanism.

This sequence belongs to the peptidase C19 family. Interacts (via CAP-Gly domain) with IKBKG/NEMO (via proline-rich C-terminal region). Interacts with TRAF2 and TRIP. Interacts with PLK1, DVL1, DVL3, MAVS, TBK1, IKKE and RIGI. Interacts (via CAP-Gly domain) with microtubules. Interacts with HDAC6 and BCL3. Interacts with MAP3K7. Identified in a complex with TRAF6 and SQSTM1. Interacts with OPTN and SQSTM1. Interacts with CEP350. Interacts with RNF31; the interaction is indirect and is mediated via SPATA2. Interacts with SPATA2 (via the PUB domain); the interaction is direct and recruits CYLD to the LUBAC complex, thereby regulating TNF-alpha-induced necroptosis. Ubiquitinated. Polyubiquitinated in hepatocytes treated with palmitic acid. Ubiquitination is mediated by E3 ligase TRIM47 and leads to proteasomal degradation. In terms of processing, phosphorylated on several serine residues by IKKA and/or IKKB in response to immune stimuli. Phosphorylation requires IKBKG. Phosphorylation abolishes TRAF2 deubiquitination, interferes with the activation of Jun kinases, and strongly reduces CD40-dependent gene activation by NF-kappa-B. As to expression, detected in fetal brain, testis, and skeletal muscle, and at a lower level in adult brain, leukocytes, liver, heart, kidney, spleen, ovary and lung. Isoform 2 is found in all tissues except kidney.

Its subcellular location is the cytoplasm. The protein resides in the perinuclear region. It is found in the cytoskeleton. It localises to the cell membrane. The protein localises to the microtubule organizing center. Its subcellular location is the centrosome. The protein resides in the spindle. It is found in the cilium basal body. It carries out the reaction Thiol-dependent hydrolysis of ester, thioester, amide, peptide and isopeptide bonds formed by the C-terminal Gly of ubiquitin (a 76-residue protein attached to proteins as an intracellular targeting signal).. Inhibited by phosphorylation at serine residues. Deubiquitinase that specifically cleaves 'Lys-63'- and linear 'Met-1'-linked polyubiquitin chains and is involved in NF-kappa-B activation and TNF-alpha-induced necroptosis. Negatively regulates NF-kappa-B activation by deubiquitinating upstream signaling factors. Contributes to the regulation of cell survival, proliferation and differentiation via its effects on NF-kappa-B activation. Negative regulator of Wnt signaling. Inhibits HDAC6 and thereby promotes acetylation of alpha-tubulin and stabilization of microtubules. Plays a role in the regulation of microtubule dynamics, and thereby contributes to the regulation of cell proliferation, cell polarization, cell migration, and angiogenesis. Required for normal cell cycle progress and normal cytokinesis. Inhibits nuclear translocation of NF-kappa-B. Plays a role in the regulation of inflammation and the innate immune response, via its effects on NF-kappa-B activation. Dispensable for the maturation of intrathymic natural killer cells, but required for the continued survival of immature natural killer cells. Negatively regulates TNFRSF11A signaling and osteoclastogenesis. Involved in the regulation of ciliogenesis, allowing ciliary basal bodies to migrate and dock to the plasma membrane; this process does not depend on NF-kappa-B activation. Ability to remove linear ('Met-1'-linked) polyubiquitin chains regulates innate immunity and TNF-alpha-induced necroptosis: recruited to the LUBAC complex via interaction with SPATA2 and restricts linear polyubiquitin formation on target proteins. Regulates innate immunity by restricting linear polyubiquitin formation on RIPK2 in response to NOD2 stimulation. Involved in TNF-alpha-induced necroptosis by removing linear ('Met-1'-linked) polyubiquitin chains from RIPK1, thereby regulating the kinase activity of RIPK1. Negatively regulates intestinal inflammation by removing 'Lys-63' linked polyubiquitin chain of NLRP6, thereby reducing the interaction between NLRP6 and PYCARD/ASC and formation of the NLRP6 inflammasome. Does not catalyze deubiquitination of heterotypic 'Lys-63'-/'Lys-48'-linked branched ubiquitin chains. Removes 'Lys-63' linked polyubiquitin chain of MAP3K7, which inhibits phosphorylation and blocks downstream activation of the JNK-p38 kinase cascades. Also removes 'Lys-63'-linked polyubiquitin chains of MAP3K1 and MA3P3K3, which inhibit their interaction with MAP2K1 and MAP2K2. This Homo sapiens (Human) protein is Ubiquitin carboxyl-terminal hydrolase CYLD.